Here is a 902-residue protein sequence, read N- to C-terminus: Aconitate hydratase A (902 aa).

[4Fe-4S] cluster-binding residues include Cys441, Cys507, and Cys510.

This sequence belongs to the aconitase/IPM isomerase family. Monomer. [4Fe-4S] cluster serves as cofactor.

It carries out the reaction citrate = D-threo-isocitrate. The enzyme catalyses (2S,3R)-3-hydroxybutane-1,2,3-tricarboxylate = 2-methyl-cis-aconitate + H2O. Its pathway is carbohydrate metabolism; tricarboxylic acid cycle; isocitrate from oxaloacetate: step 2/2. It functions in the pathway organic acid metabolism; propanoate degradation. In terms of biological role, involved in the catabolism of short chain fatty acids (SCFA) via the tricarboxylic acid (TCA)(acetyl degradation route) and probably the 2-methylcitrate cycle I (propionate degradation route). Catalyzes the reversible isomerization of citrate to isocitrate via cis-aconitate. Also able to catalyze the hydration of cis-homoaconitate to yield (R)-homocitrate, but with a lower efficiency. Could catalyze the hydration of 2-methyl-cis-aconitate to yield (2R,3S)-2-methylisocitrate. The apo form of AcnA functions as a RNA-binding regulatory protein. The protein is Aconitate hydratase A (acoA) of Thermus thermophilus (strain ATCC 27634 / DSM 579 / HB8).